Here is a 336-residue protein sequence, read N- to C-terminus: Ribosomal RNA small subunit methyltransferase C (336 aa).

Belongs to the methyltransferase superfamily. RsmC family. Monomer.

Its subcellular location is the cytoplasm. It carries out the reaction guanosine(1207) in 16S rRNA + S-adenosyl-L-methionine = N(2)-methylguanosine(1207) in 16S rRNA + S-adenosyl-L-homocysteine + H(+). Its function is as follows. Specifically methylates the guanine in position 1207 of 16S rRNA in the 30S particle. This chain is Ribosomal RNA small subunit methyltransferase C, found in Hamiltonella defensa subsp. Acyrthosiphon pisum (strain 5AT).